Reading from the N-terminus, the 611-residue chain is Beta-hexosaminidase (611 aa).

The protein belongs to the glycosyl hydrolase 20 family. In terms of assembly, homodimer.

It is found in the periplasm. The enzyme catalyses Hydrolysis of terminal non-reducing N-acetyl-D-hexosamine residues in N-acetyl-beta-D-hexosaminides.. The protein operates within glycan degradation; chitin degradation. Inhibited by mercuric ions, PNP-beta-Glc, PNP-beta-Gal, PNP-alpha-GlcNAc, and PNP-beta-S-GlcNAc. Hydrolyzes aryl-N-acetyl-beta-D-glucosaminide (aryl-beta-GlcNAc), aryl-beta-GalNAc and chitin oligosaccharides. Can hydrolyze rapidly the artificial substrates p-nitrophenyl-N-acetyl-beta-D-glucosaminide (PNP-beta-GlcNAc) and 4-methylumbelliferyl-beta-GlcNAc, and is slightly active on p-nitrophenyl-beta-GalNAc. This enzyme is not processive, i.e. when it hydrolyzes (GlcNAc)n, both products, (Glc-NAc)n-1 and the terminal GlcNAc, are released before the enzyme attacks a second molecule of (GlcNAc)n or (GlcNAc)n-1. The protein is Beta-hexosaminidase of Vibrio furnissii.